We begin with the raw amino-acid sequence, 426 residues long: Histidine--tRNA ligase (426 aa).

The protein belongs to the class-II aminoacyl-tRNA synthetase family. As to quaternary structure, homodimer.

The protein localises to the cytoplasm. The enzyme catalyses tRNA(His) + L-histidine + ATP = L-histidyl-tRNA(His) + AMP + diphosphate + H(+). In Pseudoalteromonas translucida (strain TAC 125), this protein is Histidine--tRNA ligase.